The following is a 762-amino-acid chain: Lysyl oxidase homolog 2B (762 aa).

A signal peptide spans 1 to 20 (MLALWSISFVLLCSWRLSYA). 4 SRCR domains span residues 53–154 (LRLA…VVCS), 183–292 (IRPI…VSCI), 316–417 (VRLR…VKCN), and 427–536 (LRLS…VSCS). Intrachain disulfides connect cysteine 79–cysteine 143, cysteine 92–cysteine 153, cysteine 123–cysteine 133, cysteine 213–cysteine 281, cysteine 226–cysteine 291, cysteine 260–cysteine 270, cysteine 341–cysteine 406, cysteine 354–cysteine 416, and cysteine 385–cysteine 395. The N-linked (GlcNAc...) asparagine glycan is linked to asparagine 278. The N-linked (GlcNAc...) asparagine glycan is linked to asparagine 447. 3 cysteine pairs are disulfide-bonded: cysteine 456/cysteine 522, cysteine 469/cysteine 535, and cysteine 503/cysteine 513. Residues 540 to 742 (PDLVLNPQVV…WMYNCHIGGS (203 aa)) are lysyl-oxidase like. Ca(2+)-binding residues include aspartate 541 and leucine 542. 4 disulfides stabilise this stretch: cysteine 565–cysteine 616, cysteine 571–cysteine 686, cysteine 648–cysteine 664, and cysteine 654–cysteine 676. Cu cation-binding residues include histidine 617, histidine 619, and histidine 621. Asparagine 635 is a glycosylation site (N-linked (GlcNAc...) asparagine). A cross-link (lysine tyrosylquinone (Lys-Tyr)) is located at residues 644-680 (KASFCLEDSECDEGIEKRYECANFGEQGITVGCWDTY). Residue tyrosine 680 is modified to 2',4',5'-topaquinone. Glutamate 713, aspartate 715, asparagine 718, and asparagine 719 together coordinate Ca(2+). Cysteine 723 and cysteine 737 are joined by a disulfide.

This sequence belongs to the lysyl oxidase family. The cofactor is Cu cation. Requires lysine tyrosylquinone residue as cofactor. Post-translationally, the lysine tyrosylquinone cross-link (LTQ) is generated by condensation of the epsilon-amino group of a lysine with a topaquinone produced by oxidation of tyrosine.

It localises to the secreted. The protein localises to the extracellular space. It is found in the extracellular matrix. Its subcellular location is the basement membrane. The protein resides in the nucleus. It localises to the chromosome. The protein localises to the endoplasmic reticulum. It catalyses the reaction L-lysyl-[protein] + O2 + H2O = (S)-2-amino-6-oxohexanoyl-[protein] + H2O2 + NH4(+). In terms of biological role, mediates the post-translational oxidative deamination of lysine residues on target proteins leading to the formation of deaminated lysine (allysine). Acts as a transcription corepressor and specifically mediates deamination of trimethylated 'Lys-4' of histone H3 (H3K4me3), a specific tag for epigenetic transcriptional activation. Shows no activity against histone H3 when it is trimethylated on 'Lys-9' (H3K9me3) or 'Lys-27' (H3K27me3) or when 'Lys-4' is monomethylated (H3K4me1) or dimethylated (H3K4me2). Also mediates deamination of methylated TAF10, a member of the transcription factor IID (TFIID) complex, which induces release of TAF10 from promoters, leading to inhibition of TFIID-dependent transcription. LOXL2-mediated deamination of TAF10 results in transcriptional repression of genes required for embryonic stem cell pluripotency. Involved in epithelial to mesenchymal transition (EMT) and participates in repression of E-cadherin, probably by mediating deamination of histone H3. When secreted into the extracellular matrix, promotes cross-linking of extracellular matrix proteins by mediating oxidative deamination of peptidyl lysine residues in precursors to fibrous collagen and elastin. Acts as a regulator of sprouting angiogenesis, probably via collagen IV scaffolding. Acts as a regulator of chondrocyte differentiation, probably by regulating expression of factors that control chondrocyte differentiation. Required with loxl2a for correct expression of Sox2 and for neural differentiation. In Danio rerio (Zebrafish), this protein is Lysyl oxidase homolog 2B (loxl2b).